The chain runs to 415 residues: Gamma-glutamyl phosphate reductase (415 aa).

The protein belongs to the gamma-glutamyl phosphate reductase family.

It localises to the cytoplasm. It catalyses the reaction L-glutamate 5-semialdehyde + phosphate + NADP(+) = L-glutamyl 5-phosphate + NADPH + H(+). Its pathway is amino-acid biosynthesis; L-proline biosynthesis; L-glutamate 5-semialdehyde from L-glutamate: step 2/2. Functionally, catalyzes the NADPH-dependent reduction of L-glutamate 5-phosphate into L-glutamate 5-semialdehyde and phosphate. The product spontaneously undergoes cyclization to form 1-pyrroline-5-carboxylate. This is Gamma-glutamyl phosphate reductase from Clostridium perfringens (strain SM101 / Type A).